The sequence spans 564 residues: 3beta-hydroxysteroid-dehydrogenase/decarboxylase isoform 2 (564 aa).

16–21 (GGRGFA) serves as a coordination point for NAD(+). Asparagine 146 and asparagine 158 each carry an N-linked (GlcNAc...) asparagine glycan. The NAD(+) site is built by tyrosine 161 and lysine 165. The Proton donor role is filled by lysine 165. Residues 384-564 (VADTLLWKDL…EKLFGSKKHD (181 aa)) form the Reticulon domain. A run of 2 helical transmembrane segments spans residues 398 to 418 (IAIF…STVV) and 424 to 444 (ALLV…KIFG). N-linked (GlcNAc...) asparagine glycosylation occurs at asparagine 474. The next 2 membrane-spanning stretches (helical) occupy residues 486-506 (GNDW…SLAG) and 507-527 (AISL…AFLV).

Belongs to the 3-beta-HSD family.

The protein resides in the endoplasmic reticulum membrane. The enzyme catalyses a 3beta-hydroxysteroid-4alpha-carboxylate + NAD(+) = a 3-oxosteroid + CO2 + NADH. The catalysed reaction is 4alpha-carboxy-4beta,14alpha-dimethyl-9beta,19-cyclo-5alpha-ergost-24(24(1))-en-3beta-ol + NAD(+) = cycloeucalenone + CO2 + NADH. It functions in the pathway steroid biosynthesis; zymosterol biosynthesis; zymosterol from lanosterol: step 4/6. In terms of biological role, 3beta-hydroxysteroid-dehydrogenase/decarboxylase involved in sterol synthesis. Catalyzes the formation of 3-oxosteroids from 3beta-hydroxysteroids-4alpha-carboxylate. Involved in the regulation of inflorescence internodes and leaves growth, probably by affecting auxin transporter activity possibly by altering sterol composition in the membranes. The polypeptide is 3beta-hydroxysteroid-dehydrogenase/decarboxylase isoform 2 (Arabidopsis thaliana (Mouse-ear cress)).